Here is a 243-residue protein sequence, read N- to C-terminus: Pyridoxine 5'-phosphate synthase (243 aa).

N9 is a binding site for 3-amino-2-oxopropyl phosphate. Residue 11–12 (DH) participates in 1-deoxy-D-xylulose 5-phosphate binding. 3-amino-2-oxopropyl phosphate is bound at residue R20. Residue H45 is the Proton acceptor of the active site. 2 residues coordinate 1-deoxy-D-xylulose 5-phosphate: R47 and H52. The active-site Proton acceptor is E72. 1-deoxy-D-xylulose 5-phosphate is bound at residue T102. The Proton donor role is filled by H193. Residues G194 and 215–216 (GH) contribute to the 3-amino-2-oxopropyl phosphate site.

It belongs to the PNP synthase family. As to quaternary structure, homooctamer; tetramer of dimers.

The protein resides in the cytoplasm. The enzyme catalyses 3-amino-2-oxopropyl phosphate + 1-deoxy-D-xylulose 5-phosphate = pyridoxine 5'-phosphate + phosphate + 2 H2O + H(+). Its pathway is cofactor biosynthesis; pyridoxine 5'-phosphate biosynthesis; pyridoxine 5'-phosphate from D-erythrose 4-phosphate: step 5/5. Functionally, catalyzes the complicated ring closure reaction between the two acyclic compounds 1-deoxy-D-xylulose-5-phosphate (DXP) and 3-amino-2-oxopropyl phosphate (1-amino-acetone-3-phosphate or AAP) to form pyridoxine 5'-phosphate (PNP) and inorganic phosphate. The sequence is that of Pyridoxine 5'-phosphate synthase from Salmonella typhimurium (strain LT2 / SGSC1412 / ATCC 700720).